Consider the following 241-residue polypeptide: Small ribosomal subunit protein uS2 (241 aa).

The protein belongs to the universal ribosomal protein uS2 family.

The protein is Small ribosomal subunit protein uS2 of Proteus mirabilis (strain HI4320).